We begin with the raw amino-acid sequence, 119 residues long: Beta-2-microglobulin (119 aa).

Positions 1–20 (MARSVAVVFLMLLSVVCLDA) are cleaved as a signal peptide. The 90-residue stretch at 25 to 114 (PQVQVYTRHP…TTLKEPKVVT (90 aa)) folds into the Ig-like C1-type domain. A disulfide bond links C45 and C100.

It belongs to the beta-2-microglobulin family. In terms of assembly, heterodimer of an alpha chain and a beta chain. Beta-2-microglobulin is the beta-chain of major histocompatibility complex class I molecules.

Its subcellular location is the secreted. In terms of biological role, component of the class I major histocompatibility complex (MHC). Involved in the presentation of peptide antigens to the immune system. This Cricetulus griseus (Chinese hamster) protein is Beta-2-microglobulin (B2M).